The following is a 374-amino-acid chain: Fatty acid conjugase FAC2 A (374 aa).

2 helical membrane-spanning segments follow: residues 50–70 and 74–94; these read IIVTCILFYVASNYIPMLPGF and IVWPVYWISQGVFLGRLWMIG. Positions 95-99 match the Histidine box-1 motif; sequence HECGH. The short motif at 131–135 is the Histidine box-2 element; it reads HRNHH. The next 3 helical transmembrane spans lie at 168-188, 219-239, and 246-266; these read MGLMITMLCKLTFGYAAYIMF, VLFSDVGICIVLYACYRIVMV, and FYVYGIPWVIMSAILFAATYL. The Histidine box-3 signature appears at 306 to 310; sequence HVIHH.

Belongs to the fatty acid desaturase type 1 family. In terms of tissue distribution, expressed exclusively in the developing seeds. Not detected in leaves or flower buds.

The protein resides in the microsome membrane. It carries out the reaction a (9Z,12Z)-octadecadienoyl-containing glycerolipid + AH2 + O2 = a (8E,10E,12Z)-octadecatrienoyl-containing glycerolipid + A + 2 H2O. It participates in lipid metabolism; polyunsaturated fatty acid biosynthesis. Functionally, fatty acid conjugase converting 18:2(9Z, 12Z) to calendic acid 18:3(8E, 10E, 12Z). Converts alpha-linolenic acid (18:3(9Z, 12Z, 15Z)) into 18:4(8E, 10E, 12Z, 15Z). Also has weak activity on the mono-unsaturates 16:1(9Z) and 18:1(9Z) producing two conjugated double bonds at delta(8) and delta(10) position. The protein is Fatty acid conjugase FAC2 A of Calendula officinalis (Pot marigold).